A 264-amino-acid chain; its full sequence is GTP cyclohydrolase FolE2 (264 aa).

This sequence belongs to the GTP cyclohydrolase IV family.

The catalysed reaction is GTP + H2O = 7,8-dihydroneopterin 3'-triphosphate + formate + H(+). Its pathway is cofactor biosynthesis; 7,8-dihydroneopterin triphosphate biosynthesis; 7,8-dihydroneopterin triphosphate from GTP: step 1/1. In terms of biological role, converts GTP to 7,8-dihydroneopterin triphosphate. The polypeptide is GTP cyclohydrolase FolE2 (Akkermansia muciniphila (strain ATCC BAA-835 / DSM 22959 / JCM 33894 / BCRC 81048 / CCUG 64013 / CIP 107961 / Muc)).